The chain runs to 696 residues: Polyribonucleotide nucleotidyltransferase (696 aa).

2 residues coordinate Mg(2+): D486 and D492. Residues 553–612 (PRITQKQIPKDRIGELIGPGGKMIRAIIEQSGSEISVDDSGKVTIASPSEESKEKAIAMI) enclose the KH domain. The S1 motif domain occupies 622–690 (GKIYDGVIKR…KMGKIDLSRK (69 aa)).

It belongs to the polyribonucleotide nucleotidyltransferase family. Requires Mg(2+) as cofactor.

Its subcellular location is the cytoplasm. The catalysed reaction is RNA(n+1) + phosphate = RNA(n) + a ribonucleoside 5'-diphosphate. In terms of biological role, involved in mRNA degradation. Catalyzes the phosphorolysis of single-stranded polyribonucleotides processively in the 3'- to 5'-direction. The protein is Polyribonucleotide nucleotidyltransferase of Leptospira biflexa serovar Patoc (strain Patoc 1 / ATCC 23582 / Paris).